Here is a 193-residue protein sequence, read N- to C-terminus: Alpha-S2-casein (193 aa).

The signal sequence occupies residues 1 to 15; the sequence is MKFFIFTCLLAVVLA. Ser-23, Ser-24, Ser-25, Ser-28, Ser-47, Ser-68, Ser-123, Ser-125, Ser-128, and Ser-136 each carry phosphoserine.

It belongs to the alpha-casein family. Mammary gland specific. Secreted in milk.

It is found in the secreted. Important role in the capacity of milk to transport calcium phosphate. This Camelus dromedarius (Dromedary) protein is Alpha-S2-casein (CSN1S2).